The primary structure comprises 138 residues: Transcription antitermination protein NusB (138 aa).

This sequence belongs to the NusB family.

Involved in transcription antitermination. Required for transcription of ribosomal RNA (rRNA) genes. Binds specifically to the boxA antiterminator sequence of the ribosomal RNA (rrn) operons. The protein is Transcription antitermination protein NusB of Colwellia psychrerythraea (strain 34H / ATCC BAA-681) (Vibrio psychroerythus).